The following is a 1017-amino-acid chain: Protein HIR2 (1017 aa).

7 WD repeats span residues 10-49, 74-117, 124-163, 167-208, 228-271, 275-326, and 330-371; these read YHNG…ELSK, CHKS…QLFP, SEVN…FQEL, CHEK…DDTS, PLNV…TNIE, GHDF…PITV, and AVQG…YTFS. Positions 417 to 561 are disordered; that stretch reads ISTTTSSSNT…APSDLPRSNS (145 aa). Positions 473-483 are enriched in acidic residues; it reads LDDDIDGDGDD. Polar residues-rich tracts occupy residues 518–535 and 545–561; these read SDST…VTTK and LISS…RSNS.

This sequence belongs to the WD repeat HIR1 family.

Its subcellular location is the nucleus. Required for replication-independent chromatin assembly and for the periodic repression of histone gene transcription during the cell cycle. The chain is Protein HIR2 (HIR2) from Candida albicans (strain SC5314 / ATCC MYA-2876) (Yeast).